The chain runs to 491 residues: Protein nucleotidyltransferase YdiU (491 aa).

The ATP site is built by glycine 88, glycine 90, arginine 91, lysine 111, aspartate 123, glycine 124, arginine 174, and arginine 181. Residue aspartate 250 is the Proton acceptor of the active site. Mg(2+) is bound by residues asparagine 251 and aspartate 260. Position 260 (aspartate 260) interacts with ATP.

The protein belongs to the SELO family. The cofactor is Mg(2+). Mn(2+) serves as cofactor.

The enzyme catalyses L-seryl-[protein] + ATP = 3-O-(5'-adenylyl)-L-seryl-[protein] + diphosphate. It carries out the reaction L-threonyl-[protein] + ATP = 3-O-(5'-adenylyl)-L-threonyl-[protein] + diphosphate. The catalysed reaction is L-tyrosyl-[protein] + ATP = O-(5'-adenylyl)-L-tyrosyl-[protein] + diphosphate. It catalyses the reaction L-histidyl-[protein] + UTP = N(tele)-(5'-uridylyl)-L-histidyl-[protein] + diphosphate. The enzyme catalyses L-seryl-[protein] + UTP = O-(5'-uridylyl)-L-seryl-[protein] + diphosphate. It carries out the reaction L-tyrosyl-[protein] + UTP = O-(5'-uridylyl)-L-tyrosyl-[protein] + diphosphate. Nucleotidyltransferase involved in the post-translational modification of proteins. It can catalyze the addition of adenosine monophosphate (AMP) or uridine monophosphate (UMP) to a protein, resulting in modifications known as AMPylation and UMPylation. The protein is Protein nucleotidyltransferase YdiU of Bradyrhizobium sp. (strain BTAi1 / ATCC BAA-1182).